We begin with the raw amino-acid sequence, 404 residues long: WD repeat and SOCS box-containing protein 2 (404 aa).

WD repeat units follow at residues 105–148 (PPSR…LLLN), 151–191 (GHQD…KQIQ), 195–234 (GHLQ…LIRK), 237–276 (GHQS…RLRS), and 291–330 (VHMS…PVAF). The 49-residue stretch at 356 to 404 (HVQFWTAPRVLSSLKHLCRKALRSFLTTYQVLALPIPKKMKEFLTYRTF) folds into the SOCS box domain.

It participates in protein modification; protein ubiquitination. In terms of biological role, may be a substrate-recognition component of a SCF-like ECS (Elongin-Cullin-SOCS-box protein) E3 ubiquitin ligase complex which mediates the ubiquitination and subsequent proteasomal degradation of target proteins. This is WD repeat and SOCS box-containing protein 2 (Wsb2) from Mus musculus (Mouse).